The primary structure comprises 156 residues: Small ribosomal subunit protein uS7 (156 aa).

This sequence belongs to the universal ribosomal protein uS7 family. In terms of assembly, part of the 30S ribosomal subunit. Contacts proteins S9 and S11.

Its function is as follows. One of the primary rRNA binding proteins, it binds directly to 16S rRNA where it nucleates assembly of the head domain of the 30S subunit. Is located at the subunit interface close to the decoding center, probably blocks exit of the E-site tRNA. This is Small ribosomal subunit protein uS7 from Lawsonia intracellularis (strain PHE/MN1-00).